Reading from the N-terminus, the 367-residue chain is Popeye domain-containing protein 2 (367 aa).

The N-linked (GlcNAc...) asparagine glycan is linked to Asn4. 2 consecutive transmembrane segments (helical) span residues 36 to 56 (FLLM…LFGI) and 77 to 97 (IVLW…QLVY). Disordered regions lie at residues 273 to 292 (PSAS…ALEA) and 312 to 367 (APPA…TPEL). Over residues 278–290 (GEPESEKDDEEAL) the composition is skewed to acidic residues. Residues 344–356 (PLQNSSQVMSRSQ) show a composition bias toward polar residues. The N-linked (GlcNAc...) asparagine glycan is linked to Asn347. Phosphothreonine is present on Thr364.

Belongs to the popeye family. Expressed in the developing and adult heart, with high expression levels in the sinus and atrioventricular nodes. Also expressed in the bladder and skeletal muscle.

The protein resides in the membrane. It localises to the cell membrane. The protein localises to the sarcolemma. In terms of biological role, important for the maintenance of cardiac function. Plays a regulatory function in heart rate dynamics mediated, at least in part, through cAMP-binding and, probably, by increasing cell surface expression of the potassium channel KCNK2 and enhancing current density. This is Popeye domain-containing protein 2 (Popdc2) from Mus musculus (Mouse).